Here is a 58-residue protein sequence, read N- to C-terminus: MAKIIIEGSEDVLNAFASGLVTQANSNLMKRGIWVILMEFILRQKFLFKAMAFMNLFV.

This is an uncharacterized protein from Enterobacteria phage T4 (Bacteriophage T4).